Consider the following 396-residue polypeptide: Elongation factor Tu (396 aa).

The 197-residue stretch at 10-206 (KPHCNIGTIG…AVDSYIPQPE (197 aa)) folds into the tr-type G domain. The G1 stretch occupies residues 19–26 (GHVDHGKT). 19-26 (GHVDHGKT) is a GTP binding site. Thr-26 is a binding site for Mg(2+). The interval 60–64 (GITIS) is G2. The segment at 81–84 (DCPG) is G3. GTP is bound by residues 81–85 (DCPGH) and 136–139 (NKCD). The segment at 136 to 139 (NKCD) is G4. Positions 174 to 176 (SAL) are G5.

It belongs to the TRAFAC class translation factor GTPase superfamily. Classic translation factor GTPase family. EF-Tu/EF-1A subfamily. As to quaternary structure, monomer.

Its subcellular location is the cytoplasm. It carries out the reaction GTP + H2O = GDP + phosphate + H(+). Its function is as follows. GTP hydrolase that promotes the GTP-dependent binding of aminoacyl-tRNA to the A-site of ribosomes during protein biosynthesis. This chain is Elongation factor Tu, found in Rhodopseudomonas palustris (strain BisA53).